The following is a 32-amino-acid chain: Apolipophorin-3 (32 aa).

Residues aspartate 1 to lysine 32 form a disordered region. A compositionally biased stretch (polar residues) spans lysine 20–lysine 32.

Belongs to the insect apolipophorin-3 family. Equilibrium between a soluble monomer and a bound lipoprotein form. Apolipophorin-3 associates with lipophorin during lipid loading until each particle contains 9 or 14 molecules of apolipophorin-3. As to expression, hemolymph.

It localises to the secreted. Functionally, assists in the loading of diacylglycerol, generated from triacylglycerol stores in the fat body through the action of adipokinetic hormone, into lipophorin, the hemolymph lipoprotein. It increases the lipid carrying capacity of lipophorin by covering the expanding hydrophobic surface resulting from diacylglycerol uptake. It thus plays a critical role in the transport of lipids during flight in several species of insects. The sequence is that of Apolipophorin-3 from Diatraea grandiosella (Southwestern corn borer).